The following is a 342-amino-acid chain: Succinylglutamate desuccinylase (342 aa).

3 residues coordinate Zn(2+): H63, E66, and H159. E222 is a catalytic residue.

It belongs to the AspA/AstE family. Succinylglutamate desuccinylase subfamily. Requires Zn(2+) as cofactor.

The catalysed reaction is N-succinyl-L-glutamate + H2O = L-glutamate + succinate. It functions in the pathway amino-acid degradation; L-arginine degradation via AST pathway; L-glutamate and succinate from L-arginine: step 5/5. Its function is as follows. Transforms N(2)-succinylglutamate into succinate and glutamate. The chain is Succinylglutamate desuccinylase from Paraburkholderia xenovorans (strain LB400).